The chain runs to 160 residues: Arginine repressor (160 aa).

Belongs to the ArgR family.

It is found in the cytoplasm. Its pathway is amino-acid biosynthesis; L-arginine biosynthesis [regulation]. Regulates arginine biosynthesis genes. The polypeptide is Arginine repressor (Anaeromyxobacter sp. (strain K)).